Reading from the N-terminus, the 310-residue chain is D-alanyl-D-alanine endopeptidase (310 aa).

An N-terminal signal peptide occupies residues 1 to 23 (MRNRLLSLVTLFLSLSVATAVSA). The Acyl-ester intermediate role is filled by serine 66. Lysine 69 (proton acceptor) is an active-site residue. Serine 123 is a catalytic residue. Lysine 230 contacts substrate.

The protein belongs to the peptidase S11 family.

It is found in the periplasm. Cell wall formation. This chain is D-alanyl-D-alanine endopeptidase (pbpG), found in Pseudomonas aeruginosa (strain ATCC 15692 / DSM 22644 / CIP 104116 / JCM 14847 / LMG 12228 / 1C / PRS 101 / PAO1).